We begin with the raw amino-acid sequence, 465 residues long: uncharacterized protein (465 aa).

Positions 87–112 (KTSQQIDSSPPQTPTTSNGSMMTRRQ) are enriched in polar residues. Disordered regions lie at residues 87–169 (KTSQ…SYDD) and 201–244 (EGYI…NNIF). The segment covering 113 to 139 (NANNAISSNNNTNTNVTNGSSSNTSLN) has biased composition (low complexity). A compositionally biased stretch (acidic residues) spans 141–157 (GDEEQEEEEEEENDEDS). The span at 217-244 (NRNNNNNNINKNNNNNINNNNNNNNNIF) shows a compositional bias: low complexity.

This is an uncharacterized protein from Dictyostelium discoideum (Social amoeba).